The primary structure comprises 424 residues: Probable methyltransferase EP424R (424 aa).

The Adrift-type SAM-dependent 2'-O-MTase domain occupies 103 to 315; the sequence is QIVTNAWLKM…TYIVGKNRLR (213 aa). Residues glycine 135 and aspartate 228 each coordinate S-adenosyl-L-methionine. Lysine 268 acts as the Proton acceptor in catalysis.

The protein localises to the virion. The chain is Probable methyltransferase EP424R from Ornithodoros (relapsing fever ticks).